A 232-amino-acid chain; its full sequence is RNA chaperone ProQ (232 aa).

The disordered stretch occupies residues 105–182 (EAKARVQAQR…REEQHTPVSD (78 aa)). The segment covering 117 to 136 (QQAKKREAAAAAGEKEDAPR) has biased composition (basic and acidic residues). A compositionally biased stretch (basic residues) spans 137-146 (RERKPRPTTP). The segment covering 147 to 177 (RRKEGAERKPRAQKPVEKAPKTAKAPREEQH) has biased composition (basic and acidic residues).

It belongs to the ProQ family.

The protein resides in the cytoplasm. RNA chaperone with significant RNA binding, RNA strand exchange and RNA duplexing activities. May regulate ProP activity through an RNA-based, post-transcriptional mechanism. This chain is RNA chaperone ProQ, found in Shigella dysenteriae serotype 1 (strain Sd197).